A 1151-amino-acid chain; its full sequence is UDP-N-acetylglucosamine--peptide N-acetylglucosaminyltransferase (1151 aa).

TPR repeat units lie at residues 125 to 158 (LKKV…DPNN), 193 to 226 (AEAY…KPEF), 227 to 260 (IDAY…NPDL), 261 to 294 (YCVR…QPQF), 295 to 328 (AVAW…DPNF), 329 to 362 (LDAY…SGNH), 363 to 396 (AVVH…QPHF), 397 to 430 (PDAY…CPTH), 431 to 464 (ADSQ…YPEF), 465 to 498 (AAAH…APTF), 499 to 532 (ADAY…NPAF), and 533 to 566 (ADAH…KPDF). A TPR 13; truncated repeat occupies 567–577 (PDAYCNLAHCH). The short motif at 591–607 (RKLVQIVEDQLCKKRLP) is the Nuclear localization signal element. Histidine 612 functions as the Proton acceptor in the catalytic mechanism. UDP contacts are provided by residues glutamine 954, lysine 957, 1010–1013 (VAAK), 1016–1019 (HVRR), 1034–1036 (GHT), and aspartate 1040.

This sequence belongs to the glycosyltransferase 41 family. O-GlcNAc transferase subfamily.

Its subcellular location is the nucleus. The protein resides in the cytoplasm. It localises to the perinuclear region. The enzyme catalyses L-seryl-[protein] + UDP-N-acetyl-alpha-D-glucosamine = 3-O-(N-acetyl-beta-D-glucosaminyl)-L-seryl-[protein] + UDP + H(+). It catalyses the reaction L-threonyl-[protein] + UDP-N-acetyl-alpha-D-glucosamine = 3-O-(N-acetyl-beta-D-glucosaminyl)-L-threonyl-[protein] + UDP + H(+). It participates in protein modification; protein glycosylation. Functionally, addition of nucleotide-activated sugars directly onto the polypeptide through O-glycosidic linkage with the hydroxyl of serine or threonine. Influences tap habituation in the mechanosensory neurons cell autonomously. This is UDP-N-acetylglucosamine--peptide N-acetylglucosaminyltransferase (ogt-1) from Caenorhabditis elegans.